A 472-amino-acid chain; its full sequence is UDP-glycosyltransferase 708G2 (472 aa).

H23 functions as the Proton acceptor in the catalytic mechanism. H23 lines the an anthocyanidin pocket. D117 (charge relay) is an active-site residue. A UDP-alpha-D-glucose-binding site is contributed by T140. Residues 283 to 284 are UDP; the sequence is SR. UDP-alpha-D-glucose is bound by residues V346, Q348, H363, W366, N367, S368, and E371. G386 serves as a coordination point for an anthocyanidin. Residues D387 and Q388 each coordinate UDP-alpha-D-glucose.

It belongs to the UDP-glycosyltransferase family. In terms of tissue distribution, expressed at low levels in leaves, flowers and immature leaves.

The catalysed reaction is a 3'-hydro-2'-hydroxy-beta-oxodihydrochalcone + UDP-alpha-D-glucose = a 3'-(beta-D-glucopyranosyl)-2'-hydroxy-beta-oxodihydrochalcone + UDP + H(+). Its function is as follows. UDP-glucose-dependent glucosyltransferase catalyzing the C-glucosylation of 2-hydroxyflavanones (2-hydroxylnaringenin and 2-hydroxypinocembrin) and phloretin. No activity with flavanones, flavones or flavonols. Exhibits C-glucosylation activity toward 2-phenyl-2',4',6'-trihydroxyacetophenone. Can use UDP-xylose as sugar donor, but catalytic efficiency is much lower toward UDP-xylose than toward UDP-glucose. This is UDP-glycosyltransferase 708G2 (UGT708G2) from Citrus unshiu (Satsuma mandarin).